The following is a 444-amino-acid chain: Tol-Pal system protein TolB (444 aa).

An N-terminal signal peptide occupies residues 1 to 26; the sequence is MNLFRSLAPMGLALALLLPAAAPALA. Positions 287-310 are enriched in polar residues; that stretch reads ASGTRRQLTNSPSIETAPSYSPDG. The disordered stretch occupies residues 287–311; sequence ASGTRRQLTNSPSIETAPSYSPDGS.

Belongs to the TolB family. As to quaternary structure, the Tol-Pal system is composed of five core proteins: the inner membrane proteins TolA, TolQ and TolR, the periplasmic protein TolB and the outer membrane protein Pal. They form a network linking the inner and outer membranes and the peptidoglycan layer.

Its subcellular location is the periplasm. In terms of biological role, part of the Tol-Pal system, which plays a role in outer membrane invagination during cell division and is important for maintaining outer membrane integrity. The polypeptide is Tol-Pal system protein TolB (Cereibacter sphaeroides (strain ATCC 17025 / ATH 2.4.3) (Rhodobacter sphaeroides)).